We begin with the raw amino-acid sequence, 307 residues long: METFKEYVTKRIDNTIPQVKEMFKLIWLGVADSMKLKGAIIRTIKSEVLRKNFIHCIFLNGIIFLGTYLIYLYWVSPMLNYLLNHFPTLSNMFTIIYFSLWVYPVYIFSIIANSKWYTEIAKESFVISGRTTFANSTNGILSSFVDEIYRNLLFGVILVMSAIIAFIPYTNFINFVIITWLYSFWCFDYKWILRGKWNLLQRIQYFETHWAYMFGYGLIFTTCSFFFPMLIGNAIFSILYPLFIILSISAKPTKMVNQDGILPKQIPIFYVPEIIVNVILKLYVKYKNTRGAAKSTTPSPSPTTKQN.

A run of 2 helical transmembrane segments spans residues 53–73 (FIHCIFLNGIIFLGTYLIYLY) and 92–112 (MFTIIYFSLWVYPVYIFSIIA). Residue N135 is glycosylated (N-linked (GlcNAc...) asparagine). The next 4 membrane-spanning stretches (helical) occupy residues 153 to 173 (LFGVILVMSAIIAFIPYTNFI), 175 to 195 (FVIITWLYSFWCFDYKWILRG), 225 to 245 (FFFPMLIGNAIFSILYPLFII), and 260 to 280 (GILPKQIPIFYVPEIIVNVIL).

Belongs to the EI24 family.

It localises to the membrane. The sequence is that of Protein EI24 homolog from Dictyostelium discoideum (Social amoeba).